Reading from the N-terminus, the 388-residue chain is Succinate--CoA ligase [ADP-forming] subunit beta (388 aa).

Residues 9-244 enclose the ATP-grasp domain; sequence KQLFAEYGLP…PSQDDAREAH (236 aa). Residues K46, 53–55, E99, T102, and E107 contribute to the ATP site; that span reads GRG. Residues N199 and D213 each coordinate Mg(2+). Substrate is bound by residues N264 and 321 to 323; that span reads GIV.

This sequence belongs to the succinate/malate CoA ligase beta subunit family. In terms of assembly, heterotetramer of two alpha and two beta subunits. It depends on Mg(2+) as a cofactor.

The enzyme catalyses succinate + ATP + CoA = succinyl-CoA + ADP + phosphate. It carries out the reaction GTP + succinate + CoA = succinyl-CoA + GDP + phosphate. It functions in the pathway carbohydrate metabolism; tricarboxylic acid cycle; succinate from succinyl-CoA (ligase route): step 1/1. Functionally, succinyl-CoA synthetase functions in the citric acid cycle (TCA), coupling the hydrolysis of succinyl-CoA to the synthesis of either ATP or GTP and thus represents the only step of substrate-level phosphorylation in the TCA. The beta subunit provides nucleotide specificity of the enzyme and binds the substrate succinate, while the binding sites for coenzyme A and phosphate are found in the alpha subunit. In Pseudomonas putida (strain ATCC 700007 / DSM 6899 / JCM 31910 / BCRC 17059 / LMG 24140 / F1), this protein is Succinate--CoA ligase [ADP-forming] subunit beta.